A 1363-amino-acid chain; its full sequence is Homeobox protein 13 (1363 aa).

Residues 15-73 (FVMEQIQQQQQQQQQQQQQQQQQQQQQQQQQQQQLQQQQQQQQQQQQQQQQQQQQQQQN) are a coiled coil. Disordered stretches follow at residues 66–96 (QQQQ…STVP), 120–177 (SQHA…INGS), 308–437 (INGT…YHGG), 621–731 (LNSP…QHQQ), 765–818 (HHHH…PQHS), 857–911 (SINS…SNSI), 1001–1137 (QNYN…TLIN), 1166–1202 (NFIN…KRMR), and 1270–1341 (ISFG…TLIS). Over residues 73 to 96 (NPKMNNQPNETRLPSPPLLNSTVP) the composition is skewed to polar residues. Residues 132-147 (SLNSSNNNNNNNFNNS) are compositionally biased toward low complexity. The span at 148-158 (RPTFSSCSGNS) shows a compositional bias: polar residues. 2 stretches are compositionally biased toward low complexity: residues 159–177 (NNTT…INGS) and 315–326 (SNHSNNNNNNNN). A compositionally biased stretch (basic residues) spans 327-339 (NHHHHHHHHHQKR). Residues 348 to 378 (TNHLTPLPLLHKHTNNNNNINNNNNHNHNNI) show a composition bias toward low complexity. A compositionally biased stretch (polar residues) spans 379–393 (LGSPNQLNRSQDFTS). Low complexity-rich tracts occupy residues 394–408 (KNNN…NNKI), 415–426 (NKGSPNQNSSEN), 641–693 (NNNS…NNNI), 709–731 (HHQQ…QHQQ), and 770–793 (QQQQ…SNHN). Positions 738–789 (QQQLQIQYQQQQTHNNNLNQTQQLYYNHHHHQQQQQQQQQQQQHNNNNNNNN) form a coiled coil. Composition is skewed to polar residues over residues 794 to 818 (SVLT…PQHS) and 857 to 883 (SINS…QKNR). Low complexity-rich tracts occupy residues 889–911 (ILNS…SNSI), 1001–1031 (QNYN…NNNF), and 1045–1063 (NINN…NNNN). Positions 1064–1078 (KNDKNESEFESKEKL) are enriched in basic and acidic residues. Polar residues predominate over residues 1081–1095 (PFGSSIPNIVNNEQL). 3 stretches are compositionally biased toward low complexity: residues 1096-1116 (SPYS…PQWS), 1123-1137 (TSSS…TLIN), and 1166-1177 (NFINNNSNNNNN). The segment covering 1179-1195 (EIDDDDEDGIDGIEGED) has biased composition (acidic residues). Residues 1198–1261 (KKRMRKTTRP…NRRTKDKLKN (64 aa)) constitute a DNA-binding region (homeobox). Over residues 1275 to 1294 (SSTSSTQTSTNSPSSQLSPL) the composition is skewed to low complexity. Residues 1297-1316 (NMNNNDQQSISTPSLILSQI) are compositionally biased toward polar residues. A compositionally biased stretch (low complexity) spans 1317–1334 (NNNQNNNQNNNNNNNTNN).

Its subcellular location is the nucleus. Its function is as follows. Putative transcription factor. The chain is Homeobox protein 13 (hbx13) from Dictyostelium discoideum (Social amoeba).